Consider the following 216-residue polypeptide: Ribonuclease HII (216 aa).

Positions 28–216 (ACIAGIDEAG…GVKEYVRSEE (189 aa)) constitute an RNase H type-2 domain. Positions 34, 35, and 126 each coordinate a divalent metal cation.

Belongs to the RNase HII family. Requires Mn(2+) as cofactor. Mg(2+) serves as cofactor.

The protein resides in the cytoplasm. The catalysed reaction is Endonucleolytic cleavage to 5'-phosphomonoester.. In terms of biological role, endonuclease that specifically degrades the RNA of RNA-DNA hybrids. The polypeptide is Ribonuclease HII (Geotalea uraniireducens (strain Rf4) (Geobacter uraniireducens)).